Consider the following 34-residue polypeptide: Photosystem II reaction center protein M (34 aa).

Residues 5 to 25 (ILAFIATALFILVPTAFLLII) traverse the membrane as a helical segment.

Belongs to the PsbM family. PSII is composed of 1 copy each of membrane proteins PsbA, PsbB, PsbC, PsbD, PsbE, PsbF, PsbH, PsbI, PsbJ, PsbK, PsbL, PsbM, PsbT, PsbX, PsbY, PsbZ, Psb30/Ycf12, at least 3 peripheral proteins of the oxygen-evolving complex and a large number of cofactors. It forms dimeric complexes.

Its subcellular location is the plastid. It localises to the chloroplast thylakoid membrane. One of the components of the core complex of photosystem II (PSII). PSII is a light-driven water:plastoquinone oxidoreductase that uses light energy to abstract electrons from H(2)O, generating O(2) and a proton gradient subsequently used for ATP formation. It consists of a core antenna complex that captures photons, and an electron transfer chain that converts photonic excitation into a charge separation. This subunit is found at the monomer-monomer interface. The protein is Photosystem II reaction center protein M of Ceratophyllum demersum (Rigid hornwort).